We begin with the raw amino-acid sequence, 71 residues long: Small ribosomal subunit protein bS21 (71 aa).

Residues 47-71 (RENATRAKRHAKRVARENARNTRLY) are disordered. A compositionally biased stretch (basic and acidic residues) spans 60-71 (VARENARNTRLY).

The protein belongs to the bacterial ribosomal protein bS21 family.

The chain is Small ribosomal subunit protein bS21 from Actinobacillus succinogenes (strain ATCC 55618 / DSM 22257 / CCUG 43843 / 130Z).